A 183-amino-acid polypeptide reads, in one-letter code: Large ribosomal subunit protein uL5 (183 aa).

It belongs to the universal ribosomal protein uL5 family. Part of the 50S ribosomal subunit; part of the 5S rRNA/L5/L18/L25 subcomplex. Contacts the 5S rRNA and the P site tRNA. Forms a bridge to the 30S subunit in the 70S ribosome.

Its function is as follows. This is one of the proteins that bind and probably mediate the attachment of the 5S RNA into the large ribosomal subunit, where it forms part of the central protuberance. In the 70S ribosome it contacts protein S13 of the 30S subunit (bridge B1b), connecting the 2 subunits; this bridge is implicated in subunit movement. Contacts the P site tRNA; the 5S rRNA and some of its associated proteins might help stabilize positioning of ribosome-bound tRNAs. The sequence is that of Large ribosomal subunit protein uL5 from Corynebacterium aurimucosum (strain ATCC 700975 / DSM 44827 / CIP 107346 / CN-1) (Corynebacterium nigricans).